The following is a 559-amino-acid chain: MAEVKSDIEIARAAKKKQIQEIGQKIGIPTEHLLPYGHDKAKISAEFIKSVKGNKDGKLILVTAINPTPAGEGKTTTTVGLGDGLNRIGKKAIVCIREASLGPNFGVKGGAAGGGYAQVVPMEDMNLHFTGDFHAITTAHNLLSALIDNHIYWGNELGIDTRRVVWRRVMDMNDRALREMICSLGGVANGFPREGGFDITVASEVMAILCLSTDLKDLEKRLGDIIVAYRRDKSPVYARDLKADGAMAVLLKDAMQPNLVQTLENNPAFVHGGPFANIAHGCNSVVATTTALKLADYVVTEAGFGADLGAEKFFDIKCRKAGLKPAAAVIVATVRAMKMNGGVKKEDLGKENIEAVKKGCANLGRHIENIRQFGVPAVVAINHFYSDTDAEIQAMKDYVASMGEEAVLCKHWAKGSAGIEELANKVVALAESGASQFAPLYPDAMPLFEKINTIVQRIYRGSEAIADKSVRDQLHAWEQAGYGNLPVCMAKTQYSFSTDPNLRGAPTGHTVPVREVRLSAGAGFVVIICGEVMTMPGLPKAPSSEKIFLNEAGQIEGLF.

An ATP-binding site is contributed by 68-75 (TPAGEGKT).

It belongs to the formate--tetrahydrofolate ligase family.

It carries out the reaction (6S)-5,6,7,8-tetrahydrofolate + formate + ATP = (6R)-10-formyltetrahydrofolate + ADP + phosphate. Its pathway is one-carbon metabolism; tetrahydrofolate interconversion. This chain is Formate--tetrahydrofolate ligase, found in Mesorhizobium japonicum (strain LMG 29417 / CECT 9101 / MAFF 303099) (Mesorhizobium loti (strain MAFF 303099)).